Here is a 220-residue protein sequence, read N- to C-terminus: Large ribosomal subunit protein uL3 (220 aa).

The segment at 61 to 81 (KGSKSNKYANKPAEGHAKKAD) is disordered.

It belongs to the universal ribosomal protein uL3 family. As to quaternary structure, part of the 50S ribosomal subunit. Forms a cluster with proteins L14 and L19.

In terms of biological role, one of the primary rRNA binding proteins, it binds directly near the 3'-end of the 23S rRNA, where it nucleates assembly of the 50S subunit. In Staphylococcus epidermidis (strain ATCC 35984 / DSM 28319 / BCRC 17069 / CCUG 31568 / BM 3577 / RP62A), this protein is Large ribosomal subunit protein uL3.